A 135-amino-acid polypeptide reads, in one-letter code: UPF0306 protein C8J_1355 (135 aa).

The protein belongs to the UPF0306 family.

The polypeptide is UPF0306 protein C8J_1355 (Campylobacter jejuni subsp. jejuni serotype O:6 (strain 81116 / NCTC 11828)).